The chain runs to 315 residues: 4-hydroxy-3-methylbut-2-enyl diphosphate reductase (315 aa).

Cysteine 12 lines the [4Fe-4S] cluster pocket. Residues histidine 41 and histidine 74 each contribute to the (2E)-4-hydroxy-3-methylbut-2-enyl diphosphate site. Residues histidine 41 and histidine 74 each contribute to the dimethylallyl diphosphate site. Residues histidine 41 and histidine 74 each contribute to the isopentenyl diphosphate site. Cysteine 96 is a binding site for [4Fe-4S] cluster. Position 124 (histidine 124) interacts with (2E)-4-hydroxy-3-methylbut-2-enyl diphosphate. Histidine 124 is a dimethylallyl diphosphate binding site. Residue histidine 124 participates in isopentenyl diphosphate binding. Glutamate 126 (proton donor) is an active-site residue. Position 168 (threonine 168) interacts with (2E)-4-hydroxy-3-methylbut-2-enyl diphosphate. Residue cysteine 198 coordinates [4Fe-4S] cluster. Residues serine 226, serine 227, asparagine 228, and serine 270 each contribute to the (2E)-4-hydroxy-3-methylbut-2-enyl diphosphate site. 4 residues coordinate dimethylallyl diphosphate: serine 226, serine 227, asparagine 228, and serine 270. Positions 226, 227, 228, and 270 each coordinate isopentenyl diphosphate.

This sequence belongs to the IspH family. It depends on [4Fe-4S] cluster as a cofactor.

It carries out the reaction isopentenyl diphosphate + 2 oxidized [2Fe-2S]-[ferredoxin] + H2O = (2E)-4-hydroxy-3-methylbut-2-enyl diphosphate + 2 reduced [2Fe-2S]-[ferredoxin] + 2 H(+). The enzyme catalyses dimethylallyl diphosphate + 2 oxidized [2Fe-2S]-[ferredoxin] + H2O = (2E)-4-hydroxy-3-methylbut-2-enyl diphosphate + 2 reduced [2Fe-2S]-[ferredoxin] + 2 H(+). It functions in the pathway isoprenoid biosynthesis; dimethylallyl diphosphate biosynthesis; dimethylallyl diphosphate from (2E)-4-hydroxy-3-methylbutenyl diphosphate: step 1/1. Its pathway is isoprenoid biosynthesis; isopentenyl diphosphate biosynthesis via DXP pathway; isopentenyl diphosphate from 1-deoxy-D-xylulose 5-phosphate: step 6/6. Catalyzes the conversion of 1-hydroxy-2-methyl-2-(E)-butenyl 4-diphosphate (HMBPP) into a mixture of isopentenyl diphosphate (IPP) and dimethylallyl diphosphate (DMAPP). Acts in the terminal step of the DOXP/MEP pathway for isoprenoid precursor biosynthesis. The protein is 4-hydroxy-3-methylbut-2-enyl diphosphate reductase of Azotobacter vinelandii (strain DJ / ATCC BAA-1303).